The primary structure comprises 105 residues: Chloroacetanilide N-alkylformylase 1, ferredoxin component (105 aa).

Residues 2–105 (PTIIVTTRDG…GLRVAIAPED (104 aa)) enclose the 2Fe-2S ferredoxin-type domain. [2Fe-2S] cluster contacts are provided by Cys40, Cys46, Cys49, and Cys86.

Belongs to the adrenodoxin/putidaredoxin family. The chloroacetanilide N-alkylformylase multicomponent enzyme system is composed of an oxygenase component (CndA) and an electron transfer component formed by a ferredoxin reductase (CndC1) and a ferredoxin (CndB1). In vitro, chloroacetanilide N-alkylformylase assays in which CndB1 is substituted for CndB2 demonstrate that the two enzymes possess nearly identical activities. The cofactor is [2Fe-2S] cluster.

Functionally, component of the chloroacetanilide N-alkylformylase multicomponent enzyme system involved in the degradation of chloroacetanilide herbicides (N-alkoxyalkyl-N-chloroacetyl-substituted aniline derivatives). In vitro, functions as an intermediate electron transfer protein. The protein is Chloroacetanilide N-alkylformylase 1, ferredoxin component of Rhizorhabdus wittichii (strain DC-6 / KACC 16600) (Sphingomonas wittichii).